The primary structure comprises 131 residues: Phosphomevalonate dehydratase small subunit (131 aa).

Serine 62 serves as the catalytic Proton acceptor.

It belongs to the AcnX type II small subunit family. In terms of assembly, heterodimer composed of a large subunit (PMDh-L) and a small subunit (PMDh-S).

The catalysed reaction is (R)-5-phosphomevalonate = (2E)-3-methyl-5-phosphooxypent-2-enoate + H2O. Its pathway is isoprenoid biosynthesis; isopentenyl diphosphate biosynthesis via mevalonate pathway. Component of a hydro-lyase that catalyzes the dehydration of mevalonate 5-phosphate (MVA5P) to form trans-anhydromevalonate 5-phosphate (tAHMP). Involved in the archaeal mevalonate (MVA) pathway, which provides fundamental precursors for isoprenoid biosynthesis, such as isopentenyl diphosphate (IPP) and dimethylallyl diphosphate (DMAPP). In Methanothermobacter thermautotrophicus (strain ATCC 29096 / DSM 1053 / JCM 10044 / NBRC 100330 / Delta H) (Methanobacterium thermoautotrophicum), this protein is Phosphomevalonate dehydratase small subunit.